A 126-amino-acid chain; its full sequence is Membrane-anchored ubiquitin-fold protein 2 (126 aa).

The 66-residue stretch at 14 to 79 (VEVRFRLDDG…VLENNRTLAE (66 aa)) folds into the Ubiquitin-like domain. Residue Cys123 is modified to Cysteine methyl ester. Cys123 carries S-geranylgeranyl cysteine lipidation. Positions 124–126 (TIL) are cleaved as a propeptide — removed in mature form.

It is found in the cell membrane. Functionally, may serve as docking site to facilitate the association of other proteins to the plasma membrane. This Oryza sativa subsp. japonica (Rice) protein is Membrane-anchored ubiquitin-fold protein 2 (MUB2).